We begin with the raw amino-acid sequence, 239 residues long: Ribonuclease HII (239 aa).

In terms of domain architecture, RNase H type-2 spans 30–221 (GPVAGVDEVG…VRRVATRSNG (192 aa)). A divalent metal cation is bound by residues Asp36, Glu37, and Asp130. A disordered region spans residues 217 to 239 (TRSNGAATAEREADPPQERDGTG). Residues 225–239 (AEREADPPQERDGTG) are compositionally biased toward basic and acidic residues.

This sequence belongs to the RNase HII family. Mn(2+) serves as cofactor. Requires Mg(2+) as cofactor.

The protein resides in the cytoplasm. It carries out the reaction Endonucleolytic cleavage to 5'-phosphomonoester.. Endonuclease that specifically degrades the RNA of RNA-DNA hybrids. In Mycobacterium ulcerans (strain Agy99), this protein is Ribonuclease HII.